The following is a 39-amino-acid chain: Photosystem II reaction center protein J (39 aa).

The chain crosses the membrane as a helical span at residues 9–29 (LWLVATVGGIAVITVLGIFIY).

Belongs to the PsbJ family. As to quaternary structure, PSII is composed of 1 copy each of membrane proteins PsbA, PsbB, PsbC, PsbD, PsbE, PsbF, PsbH, PsbI, PsbJ, PsbK, PsbL, PsbM, PsbT, PsbX, PsbY, PsbZ, Psb30/Ycf12, at least 3 peripheral proteins of the oxygen-evolving complex and a large number of cofactors. It forms dimeric complexes.

Its subcellular location is the plastid. The protein resides in the chloroplast thylakoid membrane. In terms of biological role, one of the components of the core complex of photosystem II (PSII). PSII is a light-driven water:plastoquinone oxidoreductase that uses light energy to abstract electrons from H(2)O, generating O(2) and a proton gradient subsequently used for ATP formation. It consists of a core antenna complex that captures photons, and an electron transfer chain that converts photonic excitation into a charge separation. The chain is Photosystem II reaction center protein J from Gracilaria tenuistipitata var. liui (Red alga).